The sequence spans 296 residues: NAD kinase (296 aa).

The Proton acceptor role is filled by Asp-73. Residues 73 to 74 (DG), Lys-78, 151 to 152 (NE), Arg-178, Asp-180, and 191 to 196 (TAHAMS) contribute to the NAD(+) site.

This sequence belongs to the NAD kinase family. It depends on a divalent metal cation as a cofactor.

It is found in the cytoplasm. It carries out the reaction NAD(+) + ATP = ADP + NADP(+) + H(+). Functionally, involved in the regulation of the intracellular balance of NAD and NADP, and is a key enzyme in the biosynthesis of NADP. Catalyzes specifically the phosphorylation on 2'-hydroxyl of the adenosine moiety of NAD to yield NADP. This chain is NAD kinase, found in Francisella tularensis subsp. holarctica (strain FTNF002-00 / FTA).